We begin with the raw amino-acid sequence, 115 residues long: MAMTLRDIINKLLRRQPASASTARERLQLVLAHDRSDLSTELLDQMRKEILEVVAKYVEIDVDEGAVSLETEDRMTALVANLPIKRTITGQIQLKEPKNQSELDSPETEGTDQKS.

The segment at 93–115 is disordered; the sequence is QLKEPKNQSELDSPETEGTDQKS. The segment covering 104–115 has biased composition (acidic residues); that stretch reads DSPETEGTDQKS.

It belongs to the MinE family.

In terms of biological role, prevents the cell division inhibition by proteins MinC and MinD at internal division sites while permitting inhibition at polar sites. This ensures cell division at the proper site by restricting the formation of a division septum at the midpoint of the long axis of the cell. The protein is Cell division topological specificity factor of Prochlorococcus marinus (strain NATL1A).